Reading from the N-terminus, the 165-residue chain is Dihydrofolate reductase type A13 (165 aa).

Residues Arg7–Arg162 form the DHFR domain.

Belongs to the dihydrofolate reductase family. In terms of assembly, homodimer.

The enzyme catalyses (6S)-5,6,7,8-tetrahydrofolate + NADP(+) = 7,8-dihydrofolate + NADPH + H(+). It functions in the pathway cofactor biosynthesis; tetrahydrofolate biosynthesis; 5,6,7,8-tetrahydrofolate from 7,8-dihydrofolate: step 1/1. Its function is as follows. Key enzyme in folate metabolism. Catalyzes an essential reaction for de novo glycine and purine synthesis, and for DNA precursor synthesis. The polypeptide is Dihydrofolate reductase type A13 (dfrA13) (Escherichia coli).